Consider the following 155-residue polypeptide: Sec-independent protein translocase protein TatB (155 aa).

A helical membrane pass occupies residues 1–21 (MIDLGISKIALIGAVALIVIG). Disordered stretches follow at residues 81-103 (ASDFEKSWSETTGSTSSDALPGF) and 131-155 (SGIRTKAQSGAARVARFRPQPSRKA). Residues 89–98 (SETTGSTSSD) show a composition bias toward polar residues.

This sequence belongs to the TatB family. As to quaternary structure, the Tat system comprises two distinct complexes: a TatABC complex, containing multiple copies of TatA, TatB and TatC subunits, and a separate TatA complex, containing only TatA subunits. Substrates initially bind to the TatABC complex, which probably triggers association of the separate TatA complex to form the active translocon.

It localises to the cell inner membrane. Functionally, part of the twin-arginine translocation (Tat) system that transports large folded proteins containing a characteristic twin-arginine motif in their signal peptide across membranes. Together with TatC, TatB is part of a receptor directly interacting with Tat signal peptides. TatB may form an oligomeric binding site that transiently accommodates folded Tat precursor proteins before their translocation. The chain is Sec-independent protein translocase protein TatB from Polaromonas naphthalenivorans (strain CJ2).